Here is a 363-residue protein sequence, read N- to C-terminus: Two-pore potassium channel 1 (363 aa).

Positions 1–61 are disordered; the sequence is MSSDAARTPL…DDVKIDEPPP (61 aa). Residues 1–78 are Cytoplasmic-facing; that stretch reads MSSDAARTPL…FSDLNPNLRR (78 aa). The span at 31–42 shows a compositional bias: basic residues; it reads SSRKRRLRRSRS. The chain crosses the membrane as a helical span at residues 79 to 99; that stretch reads VIMFLALYLTIGTLCFYLVRD. The pore-forming intramembrane region spans 111-130; that stretch reads DALYFCIVTMTTVGYGDLVP. A helical membrane pass occupies residues 137–157; it reads LLACAFVFSGMVLVGHLLSRA. The Cytoplasmic segment spans residues 158–197; the sequence is ADYLVEKQEALLVRAFHLRQSFGPTDILKELHTNKLRYKC. The chain crosses the membrane as a helical span at residues 198 to 218; sequence YATCLVLVVLFIVGTIFLVMV. The pore-forming intramembrane region spans 225–244; that stretch reads SAFYCVCSTVTTLGYGDKSF. Residues 251–271 traverse the membrane as a helical segment; that stretch reads LFAVFWILTSSICLAQFFLYV. The Cytoplasmic segment spans residues 272–363; that stretch reads AELNTENKQR…LAQTTSQIQR (92 aa). EF-hand domains are found at residues 288–323 and 327–362; these read LTRRITNNDLEAADLDEDGVVGAAEFIVYKLKEMGK and KDISGIMDEFEQLDYDESGTLTTSDIVLAQTTSQIQ. The Endoplasmic reticulum release signal signature appears at 296 to 298; the sequence is DLE. Residues aspartate 301, aspartate 303, aspartate 305, glutamate 312, aspartate 340, aspartate 342, serine 344, threonine 346, and aspartate 351 each coordinate Ca(2+).

This sequence belongs to the two pore domain potassium channel (TC 1.A.1.7) family. In terms of assembly, homodimer. Interacts with GRF1 and GRF6, but only GRF6 modulates the channel activity. Phosphorylation at Ser-42 increases and stabilizes the interaction with 14-3-3 proteins. As to expression, detected in mesophyll cells, guard cells and vascular tissues of the leaves. Expressed in the hilum, where the funiculus is attached during fruit maturation and in the embryo. Also expressed at a lower level in seedlings, root tips and elongation zones, and flowers. Could be detected in mitotically active tissues.

It is found in the vacuole membrane. Its activity is regulated as follows. Could be activated by protein kinase C. Strongly induced by calcium. Blocked by barium, tetraethylammonium (TEA), quinine and quinidine. Voltage-independent, large conductance and potassium-selective tonoplast ion channel. Regulated by cytoplasmic calcium and pH. Does not mediate slow-vacuolar (SV) ionic currents, but essential to establish VK currents. Has some permeability for Rb(+) and NH(4)(+), but none for Na(+), Cs(+) or Li(+). Involved in intracellular K(+) redistribution and/or K(+) retranslocation between different tissues. This chain is Two-pore potassium channel 1 (TPK1), found in Arabidopsis thaliana (Mouse-ear cress).